A 357-amino-acid chain; its full sequence is tRNA N6-adenosine threonylcarbamoyltransferase (357 aa).

The Fe cation site is built by His-113 and His-117. Residues 136-140 (LVSGG), Asp-169, Gly-182, and Asn-288 contribute to the substrate site. Residue Asp-316 participates in Fe cation binding.

This sequence belongs to the KAE1 / TsaD family. Fe(2+) serves as cofactor.

The protein resides in the cytoplasm. It carries out the reaction L-threonylcarbamoyladenylate + adenosine(37) in tRNA = N(6)-L-threonylcarbamoyladenosine(37) in tRNA + AMP + H(+). Functionally, required for the formation of a threonylcarbamoyl group on adenosine at position 37 (t(6)A37) in tRNAs that read codons beginning with adenine. Is involved in the transfer of the threonylcarbamoyl moiety of threonylcarbamoyl-AMP (TC-AMP) to the N6 group of A37, together with TsaE and TsaB. TsaD likely plays a direct catalytic role in this reaction. The sequence is that of tRNA N6-adenosine threonylcarbamoyltransferase from Gemmatimonas aurantiaca (strain DSM 14586 / JCM 11422 / NBRC 100505 / T-27).